We begin with the raw amino-acid sequence, 639 residues long: Chaperone protein DnaK (639 aa).

Thr198 carries the post-translational modification Phosphothreonine; by autocatalysis. The span at 603-618 (AKAQTQGGAQEGAAKQ) shows a compositional bias: low complexity. The disordered stretch occupies residues 603 to 639 (AKAQTQGGAQEGAAKQSNATADDVVDAEFEEVKDDKK). The segment covering 625 to 639 (DVVDAEFEEVKDDKK) has biased composition (acidic residues).

It belongs to the heat shock protein 70 family.

Functionally, acts as a chaperone. This chain is Chaperone protein DnaK, found in Shewanella sp. (strain MR-4).